The sequence spans 374 residues: Alanine racemase (374 aa).

The active-site Proton acceptor; specific for D-alanine is the lysine 40. Lysine 40 bears the N6-(pyridoxal phosphate)lysine mark. Arginine 139 is a substrate binding site. The Proton acceptor; specific for L-alanine role is filled by tyrosine 261. Methionine 309 is a binding site for substrate.

This sequence belongs to the alanine racemase family. The cofactor is pyridoxal 5'-phosphate.

It catalyses the reaction L-alanine = D-alanine. Its pathway is amino-acid biosynthesis; D-alanine biosynthesis; D-alanine from L-alanine: step 1/1. In terms of biological role, catalyzes the interconversion of L-alanine and D-alanine. May also act on other amino acids. This Rhodospirillum rubrum (strain ATCC 11170 / ATH 1.1.1 / DSM 467 / LMG 4362 / NCIMB 8255 / S1) protein is Alanine racemase (alr).